A 414-amino-acid chain; its full sequence is MIYVTFTPYGAFGVKDNKEVSGLEDIEYKKLFNEEEIPDIMFKLKTQPNKIADELKEEWGDEIKLETLSTEPFNIGEFLRNNLFKVGKELGYFNNYDEFRKKMHYWSTELTKKVIKSYAQQKDKIIIQVAEAISDLDKTLNLLSERLREWYSLYFPELDHLVNKHEVYANLITKLGKRKNFTKSQLKKILPSKLAGKIAEAAKNSMGGELEDYDLDVIVKFAEEINHLYEKRKELYNYLEKLMNEEAPNITKLAGVSLGARLIGLAGGLEKLAKMPASTIQVLGAEKALFAHLRMGVEPPKHGIIYNHPLIQGSPHWQRGKIARALACKLAIAARADYVGDYIADELLEKLNKRVEEIRRKYPKPPKKKKKEKPKAKKKEKKGKKEKSKKKKDKKKDKKGKKERKVIGKTKSRK.

The 115-residue stretch at 246 to 360 (EAPNITKLAG…LNKRVEEIRR (115 aa)) folds into the Nop domain. Residues 358 to 414 (IRRKYPKPPKKKKKEKPKAKKKEKKGKKEKSKKKKDKKKDKKGKKERKVIGKTKSRK) form a disordered region. Basic residues predominate over residues 361–414 (KYPKPPKKKKKEKPKAKKKEKKGKKEKSKKKKDKKKDKKGKKERKVIGKTKSRK).

This sequence belongs to the NOP5/NOP56 family.

This is an uncharacterized protein from Methanocaldococcus jannaschii (strain ATCC 43067 / DSM 2661 / JAL-1 / JCM 10045 / NBRC 100440) (Methanococcus jannaschii).